The following is a 175-amino-acid chain: Nucleoside-triphosphatase THEP1 (175 aa).

ATP-binding positions include glycine 15–threonine 22 and valine 106–glycine 113.

This sequence belongs to the THEP1 NTPase family.

The catalysed reaction is a ribonucleoside 5'-triphosphate + H2O = a ribonucleoside 5'-diphosphate + phosphate + H(+). Its function is as follows. Has nucleotide phosphatase activity towards ATP, GTP, CTP, TTP and UTP. May hydrolyze nucleoside diphosphates with lower efficiency. This chain is Nucleoside-triphosphatase THEP1, found in Saccharolobus solfataricus (strain ATCC 35092 / DSM 1617 / JCM 11322 / P2) (Sulfolobus solfataricus).